A 356-amino-acid chain; its full sequence is Inositol phosphoceramide mannosyltransferase 3 (356 aa).

A helical transmembrane segment spans residues 4 to 24 (ILFYFFFFLTLILSATVYLFG). Asn-52 and Asn-146 each carry an N-linked (GlcNAc...) asparagine glycan. 2 consecutive transmembrane segments (helical) span residues 197 to 217 (FPYLTVMYSTGPLFLSIIWSA) and 269 to 289 (WAIFTFLGFLTFFIVVYFIFG). 3 positions are modified to phosphoserine: Ser-307, Ser-353, and Ser-355.

The protein belongs to the glycosyltransferase 32 family.

It is found in the endoplasmic reticulum membrane. Its subcellular location is the golgi apparatus. It localises to the cis-Golgi network membrane. The protein resides in the trans-Golgi network membrane. With imt1 and imt2, is required for the synthesis of mannosylinositol phosphoceramide (MIPC). Catalyzes the addition of mannosyl to inositol phosphoceramide (IPC). MIPC is essential for cell morphology, cell-surface distribution of ergosterol, localization for plasma-membrane transporters, and lipid-raft-mediated endocytosis of plasma membrane proteins to the vacuole. This Schizosaccharomyces pombe (strain 972 / ATCC 24843) (Fission yeast) protein is Inositol phosphoceramide mannosyltransferase 3.